We begin with the raw amino-acid sequence, 503 residues long: Inosine-5'-monophosphate dehydrogenase 1 (503 aa).

Position 2 is an N-acetylserine (S2). Positions M167–G225 constitute a CBS domain. Residues D265 to S267 and G315 to G317 each bind NAD(+). 2 residues coordinate K(+): G317 and G319. S320 is a binding site for IMP. K(+) is bound at residue C322. Catalysis depends on C322, which acts as the Thioimidate intermediate. IMP-binding positions include D355–G357, G378–S379, and Y402–G406. The active-site Proton acceptor is the R418. Residue Q430 coordinates IMP. K(+) is bound by residues E489, G490, and G491.

Belongs to the IMPDH/GMPR family. Homotetramer. It depends on K(+) as a cofactor.

Its subcellular location is the cytoplasm. The catalysed reaction is IMP + NAD(+) + H2O = XMP + NADH + H(+). It functions in the pathway purine metabolism; XMP biosynthesis via de novo pathway; XMP from IMP: step 1/1. Its activity is regulated as follows. Mycophenolic acid (MPA) is a non-competitive inhibitor that prevents formation of the closed enzyme conformation by binding to the same site as the amobile flap. In contrast, mizoribine monophosphate (MZP) is a competitive inhibitor that induces the closed conformation. MPA is a potent inhibitor of mammalian IMPDHs but a poor inhibitor of the bacterial enzymes. MZP is a more potent inhibitor of bacterial IMPDH. Its function is as follows. Catalyzes the conversion of inosine 5'-phosphate (IMP) to xanthosine 5'-phosphate (XMP), the first committed and rate-limiting step in the de novo synthesis of guanine nucleotides, and therefore plays an important role in the regulation of cell growth. The chain is Inosine-5'-monophosphate dehydrogenase 1 from Arabidopsis thaliana (Mouse-ear cress).